A 226-amino-acid polypeptide reads, in one-letter code: Membrane protein (226 aa).

The Virion surface portion of the chain corresponds to 1-11 (MSNGSIPVDEV). The chain crosses the membrane as a helical span at residues 12–32 (IEHLRNWNFTWNIILTILLVV). Residues 33-41 (LQYGHYKYS) are Intravirion-facing. A helical membrane pass occupies residues 42 to 62 (VFLYGVKMAILWILWPLVLAL). At 63–75 (SLFDAWASFQVNW) the chain is on the virion surface side. A helical membrane pass occupies residues 76–96 (VFFAFSILMACITLMLWIMYF). Residues 97-226 (VNSIRLWRRT…TDSEKVLHLV (130 aa)) lie on the Intravirion side of the membrane. Residues 200-216 (RSKHGDYSAVSNPSAVL) are interaction with N protein.

Belongs to the alphacoronaviruses M protein family. Homomultimer. Interacts with envelope E protein in the budding compartment of the host cell, which is located between endoplasmic reticulum and the Golgi complex. Forms a complex with HE and S proteins. Interacts with nucleocapsid N protein. This interaction probably participates in RNA packaging into the virus.

The protein localises to the virion membrane. It is found in the host Golgi apparatus membrane. Its function is as follows. Component of the viral envelope that plays a central role in virus morphogenesis and assembly via its interactions with other viral proteins. The chain is Membrane protein from Sus scrofa (Pig).